A 331-amino-acid polypeptide reads, in one-letter code: L-lactate dehydrogenase A chain (331 aa).

Residues 29-57 (GMVG…MEDK) and Arg-98 contribute to the NAD(+) site. Substrate is bound by residues Arg-105, Asn-137, and Arg-168. Asn-137 contacts NAD(+). The Proton acceptor role is filled by His-192. Position 247 (Thr-247) interacts with substrate.

Belongs to the LDH/MDH superfamily. LDH family. Homotetramer.

The protein resides in the cytoplasm. The enzyme catalyses (S)-lactate + NAD(+) = pyruvate + NADH + H(+). The protein operates within fermentation; pyruvate fermentation to lactate; (S)-lactate from pyruvate: step 1/1. Its function is as follows. Interconverts simultaneously and stereospecifically pyruvate and lactate with concomitant interconversion of NADH and NAD(+). The chain is L-lactate dehydrogenase A chain (ldha) from Dissostichus mawsoni (Antarctic cod).